The sequence spans 257 residues: MTSNPLDESMESLTVVPPAASPASRILVVEDEAVIRDMVALVLQQEGFTVDVAADGRTALNYFRSDSPEAGSVTENPDLVVLDLMLPAVNGLDFCRLLRRQGVTVPILMLSAKDTETDRVVGLEIGADDYLTKPFGTRELVARCRALLRRSQNQPAETPAVLRYEGLKLFPEECRVLLDDRELTLSPKEFRLLELFMRHPRRVWSRDQLLEKIWGIDFMGDSKTIDVHIRWLREKIEANPSNPSYLLTVRGFGYRLG.

The Response regulatory domain occupies 25–148 (RILVVEDEAV…ELVARCRALL (124 aa)). Aspartate 83 is modified (4-aspartylphosphate). A DNA-binding region (ompR/PhoB-type) is located at residues 159–257 (PAVLRYEGLK…TVRGFGYRLG (99 aa)).

In terms of processing, phosphorylated by SphS.

Functionally, member of the two-component regulatory system SphR/SphS. Response regulator. Involved in inducible production of alkaline phosphatase in response to phosphate limitation as it is directly involved in the regulation of phoA transcription in response to phosphate limitation. Binds to two distinct sites upstream from the phoA promoter. The chain is Alkaline phosphatase synthesis transcriptional regulatory protein SphR (sphR) from Synechococcus elongatus (strain ATCC 33912 / PCC 7942 / FACHB-805) (Anacystis nidulans R2).